Reading from the N-terminus, the 177-residue chain is Adenylate kinase (177 aa).

Residue 13–18 participates in ATP binding; sequence GCGKGT. An NMP region spans residues 33-62; sequence SSGDIIREEMKKSSKEATVIREMVNSGRLA. AMP-binding positions include Ser34, Arg39, 60-62, 85-88, and Gln92; these read RLA and GYPR. The LID stretch occupies residues 119–127; that stretch reads GRNEGRDDD. Arg120 is a binding site for ATP. AMP is bound by residues Arg124 and Arg135.

It belongs to the adenylate kinase family. Monomer.

The protein localises to the cytoplasm. It carries out the reaction AMP + ATP = 2 ADP. Catalyzes the reversible transfer of the terminal phosphate group between ATP and AMP. Plays an important role in cellular energy homeostasis and in adenine nucleotide metabolism. The sequence is that of Adenylate kinase from Encephalitozoon cuniculi (strain GB-M1) (Microsporidian parasite).